Reading from the N-terminus, the 1213-residue chain is Chitin synthase 3 (1213 aa).

The segment at 1–97 is disordered; that stretch reads MSNFRDSSSP…TPPHQEEEED (97 aa). At 1–168 the chain is on the cytoplasmic side; that stretch reads MSNFRDSSSP…KPKHDIYFWK (168 aa). The segment covering 32 to 44 has biased composition (basic and acidic residues); sequence IRPERSRMDESHP. Polar residues predominate over residues 75–87; sequence ELSTSRSHLSNYA. Residues 169–189 traverse the membrane as a helical segment; that stretch reads VYCYAITFWAPAPLLKLFGLP. The Extracellular segment spans residues 190–200; it reads TKDRQFAWREK. Residues 201–221 form a helical membrane-spanning segment; sequence IGLISCILYVGAFVAYLTFGF. Over 222-450 the chain is Cytoplasmic; sequence TKTVCSSQVV…TDTIGCIASK (229 aa). A helical transmembrane segment spans residues 451-471; the sequence is VVLYMSLVFILSVVVVKFIMA. Residues 472–1016 are Extracellular-facing; sequence CWFKWVTSRK…INSTVHNLFE (545 aa). Residues Asn-588 and Asn-1008 are each glycosylated (N-linked (GlcNAc...) asparagine). The helical transmembrane segment at 1017–1037 threads the bilayer; sequence LVLVKDLCGTFCFSMQFVIFI. At 1038 to 1039 the chain is on the cytoplasmic side; the sequence is EL. The helical transmembrane segment at 1040-1060 threads the bilayer; the sequence is IGTLVLPAAITFTIYVIIVAI. Over 1061-1065 the chain is Extracellular; the sequence is VSKPT. The chain crosses the membrane as a helical span at residues 1066 to 1086; that stretch reads PVMSLVLLAVIFGLPGCLIVI. The Cytoplasmic portion of the chain corresponds to 1087–1213; sequence TVSSLSYLVY…LSQGSSSGSS (127 aa). The interval 1161 to 1213 is disordered; it reads ERRSTENRKQQQQQQLTNNSSNNLAVPGAAWDPSNTGGNLIDDLSQGSSSGSS.

The protein belongs to the chitin synthase family. Class IV subfamily.

The protein localises to the cell membrane. The enzyme catalyses [(1-&gt;4)-N-acetyl-beta-D-glucosaminyl](n) + UDP-N-acetyl-alpha-D-glucosamine = [(1-&gt;4)-N-acetyl-beta-D-glucosaminyl](n+1) + UDP + H(+). Polymerizes chitin, a structural polymer of the cell wall and septum, by transferring the sugar moiety of UDP-GlcNAc to the non-reducing end of the growing chitin polymer. This is Chitin synthase 3 (CHS3) from Candida albicans (Yeast).